Consider the following 394-residue polypeptide: Major outer membrane porin, serovar B (394 aa).

The first 22 residues, 1–22, serve as a signal peptide directing secretion; the sequence is MKKLLKSVLVFAALSSASSLQA.

It belongs to the chlamydial porin (CP) (TC 1.B.2) family. Part of a disulfide cross-linked outer membrane complex (COMC) composed of the major outer membrane porin (MOMP), the small cysteine-rich protein (OmcA) and the large cysteine-rich periplasmic protein (OmcB).

The protein resides in the cell outer membrane. In terms of biological role, in elementary bodies (EBs, the infectious stage, which is able to survive outside the host cell) provides the structural integrity of the outer envelope through disulfide cross-links with the small cysteine-rich protein and the large cysteine-rich periplasmic protein. It has been described in publications as the Sarkosyl-insoluble COMC (Chlamydia outer membrane complex), and serves as the functional equivalent of peptidoglycan. Permits diffusion of specific solutes through the outer membrane. This is Major outer membrane porin, serovar B (ompA) from Chlamydia trachomatis.